A 485-amino-acid polypeptide reads, in one-letter code: NADH-quinone oxidoreductase subunit N (485 aa).

The next 14 helical transmembrane spans lie at 8–28 (LIALLPLLIVGLTVVVVMLSI), 35–55 (FLNATLSVIGLNAALVSLWFV), 71–91 (GFAMLYTGLVLLASLATCTFA), 105–125 (FYLLVLIASLGGILLANANHL), 127–147 (ALFLGIELISLPLFGLIGYAF), 159–179 (YTILSAAASSFLLFGMALVYA), 203–223 (LLAGFGLMIVGLGFKLSLVPF), 235–255 (PAPVSTFLATASKIAIFGVVM), 271–291 (VVLGIIAFASIIFGNLMALSQ), 297–317 (LLGYSSISHLGYLLVALIALQ), 326–346 (VGVYLAGYLFSSLGAFGVVSL), 373–393 (AAVMTVMMLSLAGIPMTLGFI), 408–430 (WWLVAAVVVGSAIGLYYYLRVAV), and 455–475 (IVVLISALLVLVLGVWPQPLI).

It belongs to the complex I subunit 2 family. In terms of assembly, NDH-1 is composed of 13 different subunits. Subunits NuoA, H, J, K, L, M, N constitute the membrane sector of the complex.

The protein resides in the cell inner membrane. It carries out the reaction a quinone + NADH + 5 H(+)(in) = a quinol + NAD(+) + 4 H(+)(out). Functionally, NDH-1 shuttles electrons from NADH, via FMN and iron-sulfur (Fe-S) centers, to quinones in the respiratory chain. The immediate electron acceptor for the enzyme in this species is believed to be ubiquinone. Couples the redox reaction to proton translocation (for every two electrons transferred, four hydrogen ions are translocated across the cytoplasmic membrane), and thus conserves the redox energy in a proton gradient. The polypeptide is NADH-quinone oxidoreductase subunit N (Salmonella schwarzengrund (strain CVM19633)).